Consider the following 84-residue polypeptide: ATP synthase subunit c (84 aa).

The next 2 helical transmembrane spans lie at 13-33 (IAVG…WGLI) and 56-76 (FIFA…GFWF).

This sequence belongs to the ATPase C chain family. As to quaternary structure, F-type ATPases have 2 components, F(1) - the catalytic core - and F(0) - the membrane proton channel. F(1) has five subunits: alpha(3), beta(3), gamma(1), delta(1), epsilon(1). F(0) has three main subunits: a(1), b(2) and c(10-14). The alpha and beta chains form an alternating ring which encloses part of the gamma chain. F(1) is attached to F(0) by a central stalk formed by the gamma and epsilon chains, while a peripheral stalk is formed by the delta and b chains.

It is found in the cell inner membrane. In terms of biological role, f(1)F(0) ATP synthase produces ATP from ADP in the presence of a proton or sodium gradient. F-type ATPases consist of two structural domains, F(1) containing the extramembraneous catalytic core and F(0) containing the membrane proton channel, linked together by a central stalk and a peripheral stalk. During catalysis, ATP synthesis in the catalytic domain of F(1) is coupled via a rotary mechanism of the central stalk subunits to proton translocation. Its function is as follows. Key component of the F(0) channel; it plays a direct role in translocation across the membrane. A homomeric c-ring of between 10-14 subunits forms the central stalk rotor element with the F(1) delta and epsilon subunits. This is ATP synthase subunit c from Acidithiobacillus ferrooxidans (strain ATCC 23270 / DSM 14882 / CIP 104768 / NCIMB 8455) (Ferrobacillus ferrooxidans (strain ATCC 23270)).